Here is a 268-residue protein sequence, read N- to C-terminus: Mediator of RNA polymerase II transcription subunit 18 (268 aa).

Positions 91 to 112 (APASPVADQDAHMSGTDEKSSV) are disordered. Residues 99-112 (QDAHMSGTDEKSSV) show a composition bias toward basic and acidic residues.

It belongs to the Mediator complex subunit 18 family. In terms of assembly, component of the Mediator complex.

The protein localises to the nucleus. Component of the Mediator complex, a coactivator involved in the regulated transcription of nearly all RNA polymerase II-dependent genes. Mediator functions as a bridge to convey information from gene-specific regulatory proteins to the basal RNA polymerase II transcription machinery. Mediator is recruited to promoters by direct interactions with regulatory proteins and serves as a scaffold for the assembly of a functional preinitiation complex with RNA polymerase II and the general transcription factors. The sequence is that of Mediator of RNA polymerase II transcription subunit 18 (srb5) from Aspergillus fumigatus (strain ATCC MYA-4609 / CBS 101355 / FGSC A1100 / Af293) (Neosartorya fumigata).